We begin with the raw amino-acid sequence, 454 residues long: Phosphoglucosamine mutase (454 aa).

Residue serine 104 is the Phosphoserine intermediate of the active site. Residues serine 104, aspartate 247, aspartate 249, and aspartate 251 each coordinate Mg(2+). The residue at position 104 (serine 104) is a Phosphoserine.

Belongs to the phosphohexose mutase family. It depends on Mg(2+) as a cofactor. Post-translationally, activated by phosphorylation.

The catalysed reaction is alpha-D-glucosamine 1-phosphate = D-glucosamine 6-phosphate. Catalyzes the conversion of glucosamine-6-phosphate to glucosamine-1-phosphate. The polypeptide is Phosphoglucosamine mutase (Bifidobacterium animalis subsp. lactis (strain AD011)).